Reading from the N-terminus, the 403-residue chain is MVQISQIGAVLAVCSTLTVAAPTKGKARFNVPQVAVPMKAVHHPAVAYARALHKFGMKVPKAVSDAARGSVPTTPTKDDEQYVTQVTVGQGKLNLDLDTGSGDLWVFSTETPKDQSQGHNLYMPTSKSKRLDGYSWEITYGDMSSAGGDVFLDTVSIGNVTASSQAVESAKKVSDQFAKDKATDGLMGLSFSVLNTVQPKPQTTFFDTVLKQLEKPLFTCTLKHGQPGSYDFGYIDDSKHSGEIAYTNVDNSQGWWGFTAESYSIGGGSNSTHSFHGAQHHGARGSSIDGIADTGTTLMLLSDDVVQEYYKQVQGAKNDQQQGGWVFPCDAKLPDFTLSISGYNAVVPGKFMNYQAVGSVCFGGLQSVGSSGGVPNIFGDVFLKSQFVVWDTEGPRIGFAPQA.

The first 20 residues, Met-1–Ala-20, serve as a signal peptide directing secretion. A propeptide spans Ala-21–Ala-67 (activation peptide). The region spanning Tyr-82–Ala-400 is the Peptidase A1 domain. Residue Asp-98 is part of the active site. N-linked (GlcNAc...) asparagine glycosylation is found at Asn-159 and Asn-270. Asp-293 is a catalytic residue. A disulfide bridge connects residues Cys-329 and Cys-361.

Belongs to the peptidase A1 family.

The protein resides in the secreted. The enzyme catalyses Hydrolysis of proteins with broad specificity. Generally favors hydrophobic residues in P1 and P1', but also accepts Lys in P1, which leads to activation of trypsinogen. Does not clot milk.. Secreted aspartic endopeptidase that allows assimilation of proteinaceous substrates. Can catalyze hydrolysis of the major structural proteins of basement membrane, elastin, collagen, and laminin. Thought to play a significant role in virulence. Its function is as follows. Can catalyze hydrolysis of the major structural proteins of basement membrane, elastin, collagen, and laminin. Thought to play a significant role in virulence. This chain is Aspartic endopeptidase PEP1 (PEP1), found in Trichophyton verrucosum (strain HKI 0517).